The following is a 161-amino-acid chain: Phosphopantetheine adenylyltransferase (161 aa).

A substrate-binding site is contributed by S11. ATP is bound by residues S11–F12 and H19. Residues K43, L75, and R89 each coordinate substrate. Residues G90–R92, E100, and Y125–S131 each bind ATP.

Belongs to the bacterial CoaD family. As to quaternary structure, homohexamer. Mg(2+) serves as cofactor.

It localises to the cytoplasm. The catalysed reaction is (R)-4'-phosphopantetheine + ATP + H(+) = 3'-dephospho-CoA + diphosphate. It participates in cofactor biosynthesis; coenzyme A biosynthesis; CoA from (R)-pantothenate: step 4/5. Its function is as follows. Reversibly transfers an adenylyl group from ATP to 4'-phosphopantetheine, yielding dephospho-CoA (dPCoA) and pyrophosphate. This Geobacter sp. (strain M21) protein is Phosphopantetheine adenylyltransferase.